A 279-amino-acid chain; its full sequence is MIKKCLFPAAGYGTRFLPATKAMPKEMLPVVNKPLIQYAVEEALEAGLSEIGIVTGRGKRSLEDHFDISYELEHQIRNTDKEKYLVGIRRLIDECTFAYTRQVEMKGLGHAILTGRPLIGDEPFAVVLADDLCLNLEGDSVLKQMVKLYNQFRCSIVAIQEVPPEETNKYGVIAGEMIRDDIFRVNTMVEKPKPEEAPSNLAIIGRYILTPDIFDLIEQTEPGKGGEIQITDALMKQAQDGCVLAYKFKGKRFDCGSAEGYIEATNFCYENLYKTGKAH.

Belongs to the UDPGP type 2 family.

The catalysed reaction is alpha-D-glucose 1-phosphate + UTP + H(+) = UDP-alpha-D-glucose + diphosphate. Its function is as follows. May play a role in stationary phase survival. This chain is UTP--glucose-1-phosphate uridylyltransferase (galU), found in Pseudomonas aeruginosa (strain ATCC 15692 / DSM 22644 / CIP 104116 / JCM 14847 / LMG 12228 / 1C / PRS 101 / PAO1).